The primary structure comprises 113 residues: Probable 4-amino-4-deoxy-L-arabinose-phosphoundecaprenol flippase subunit ArnE (113 aa).

3 helical membrane passes run 37 to 57 (SALK…LFWL), 62 to 82 (ILPL…VTLA), and 91 to 111 (AGIK…LMSL). Residues 45–111 (AVILLAVGML…IMLGILLMSL (67 aa)) enclose the EamA domain.

The protein belongs to the ArnE family. In terms of assembly, heterodimer of ArnE and ArnF.

The protein resides in the cell inner membrane. It participates in bacterial outer membrane biogenesis; lipopolysaccharide biosynthesis. Its function is as follows. Translocates 4-amino-4-deoxy-L-arabinose-phosphoundecaprenol (alpha-L-Ara4N-phosphoundecaprenol) from the cytoplasmic to the periplasmic side of the inner membrane. The sequence is that of Probable 4-amino-4-deoxy-L-arabinose-phosphoundecaprenol flippase subunit ArnE from Photorhabdus laumondii subsp. laumondii (strain DSM 15139 / CIP 105565 / TT01) (Photorhabdus luminescens subsp. laumondii).